We begin with the raw amino-acid sequence, 605 residues long: Phosphoenolpyruvate carboxykinase (ATP) (605 aa).

Residues 27–48 (SGPSSSFINNNNSNNNNNKSSN) are compositionally biased toward low complexity. The disordered stretch occupies residues 27–67 (SGPSSSFINNNNSNNNNNKSSNMFNHDHVNKTNLHPGGVKP). An ATP-binding site is contributed by 307-314 (GLSGTGKT).

This sequence belongs to the phosphoenolpyruvate carboxykinase (ATP) family.

The enzyme catalyses oxaloacetate + ATP = phosphoenolpyruvate + ADP + CO2. Its pathway is carbohydrate biosynthesis; gluconeogenesis. This chain is Phosphoenolpyruvate carboxykinase (ATP) (acu-6), found in Neurospora crassa (strain ATCC 24698 / 74-OR23-1A / CBS 708.71 / DSM 1257 / FGSC 987).